Consider the following 217-residue polypeptide: Dihydroflavonol 4-reductase (217 aa).

The NADP(+) site is built by K27 and Y146.

This sequence belongs to the NAD(P)-dependent epimerase/dehydratase family. Dihydroflavonol-4-reductase subfamily.

It carries out the reaction a (2R,3S,4S)-leucoanthocyanidin + NADP(+) = a (2R,3R)-dihydroflavonol + NADPH + H(+). The catalysed reaction is (2S)-flavan-4-ol + NADP(+) = (2S)-flavanone + NADPH + H(+). The protein operates within pigment biosynthesis; anthocyanin biosynthesis. In terms of biological role, bifunctional enzyme involved in flavonoid metabolism. This chain is Dihydroflavonol 4-reductase (DFR1), found in Medicago sativa (Alfalfa).